Reading from the N-terminus, the 208-residue chain is Fibroblast growth factor 6 (208 aa).

Residues 1–37 (MALGQRLFITMSRGAGRVQGTLQALVFLGVLVGMVVP) form the signal peptide. Asparagine 45 carries an N-linked (GlcNAc...) asparagine glycan. Cysteine 90 and cysteine 157 are disulfide-bonded.

Belongs to the heparin-binding growth factors family. As to quaternary structure, interacts with FGFR1, FGFR2 and FGFR4. Affinity between fibroblast growth factors (FGFs) and their receptors is increased by heparan sulfate glycosaminoglycans that function as coreceptors. As to expression, embryos, adult muscles and adult testis.

Its subcellular location is the secreted. It localises to the extracellular space. Plays an important role in the regulation of cell proliferation, cell differentiation, angiogenesis and myogenesis, and is required for normal muscle regeneration. This chain is Fibroblast growth factor 6 (Fgf6), found in Mus musculus (Mouse).